The sequence spans 278 residues: Dermonecrotic toxin Ls4SicTox-alphaIII1ii (278 aa).

The active site involves His-5. Positions 25 and 27 each coordinate Mg(2+). Catalysis depends on His-40, which acts as the Nucleophile. Cys-44 and Cys-50 are joined by a disulfide. Asp-84 is a binding site for Mg(2+).

It belongs to the arthropod phospholipase D family. Class I subfamily. Mg(2+) is required as a cofactor. As to expression, expressed by the venom gland.

Its subcellular location is the secreted. It carries out the reaction an N-(acyl)-sphingosylphosphocholine = an N-(acyl)-sphingosyl-1,3-cyclic phosphate + choline. The enzyme catalyses an N-(acyl)-sphingosylphosphoethanolamine = an N-(acyl)-sphingosyl-1,3-cyclic phosphate + ethanolamine. It catalyses the reaction a 1-acyl-sn-glycero-3-phosphocholine = a 1-acyl-sn-glycero-2,3-cyclic phosphate + choline. The catalysed reaction is a 1-acyl-sn-glycero-3-phosphoethanolamine = a 1-acyl-sn-glycero-2,3-cyclic phosphate + ethanolamine. In terms of biological role, dermonecrotic toxins cleave the phosphodiester linkage between the phosphate and headgroup of certain phospholipids (sphingolipid and lysolipid substrates), forming an alcohol (often choline) and a cyclic phosphate. This toxin acts on sphingomyelin (SM). It may also act on ceramide phosphoethanolamine (CPE), lysophosphatidylcholine (LPC) and lysophosphatidylethanolamine (LPE), but not on lysophosphatidylserine (LPS), and lysophosphatidylglycerol (LPG). It acts by transphosphatidylation, releasing exclusively cyclic phosphate products as second products. Induces dermonecrosis, hemolysis, increased vascular permeability, edema, inflammatory response, and platelet aggregation. This chain is Dermonecrotic toxin Ls4SicTox-alphaIII1ii, found in Loxosceles sp. (strain 4 GJB-2008) (Recluse spider).